The chain runs to 712 residues: Saccharolysin (712 aa).

Ser-73 carries the post-translational modification Phosphoserine. His-501 contacts Zn(2+). Glu-502 is an active-site residue. Residues His-505 and His-508 each contribute to the Zn(2+) site.

It belongs to the peptidase M3 family. It depends on Zn(2+) as a cofactor.

The protein localises to the cytoplasm. It carries out the reaction Cleavage of Pro-|-Phe and Ala-|-Ala bonds.. Functionally, could be involved in late stage of protein degradation. In Saccharomyces cerevisiae (strain ATCC 204508 / S288c) (Baker's yeast), this protein is Saccharolysin (PRD1).